We begin with the raw amino-acid sequence, 219 residues long: Oxaloacetate tautomerase YcgM (219 aa).

Residues Glu70, Glu72, and Asp101 each coordinate Mg(2+).

It belongs to the FAH family. The cofactor is a divalent metal cation.

The enzyme catalyses oxaloacetate = enol-oxaloacetate. Tautomerase that converts enol-oxaloacetate to the keto form of oxaloacetate. This Escherichia coli (strain K12) protein is Oxaloacetate tautomerase YcgM.